Consider the following 361-residue polypeptide: Peptide chain release factor 1 (361 aa).

N5-methylglutamine is present on Gln236.

It belongs to the prokaryotic/mitochondrial release factor family. In terms of processing, methylated by PrmC. Methylation increases the termination efficiency of RF1.

It localises to the cytoplasm. Functionally, peptide chain release factor 1 directs the termination of translation in response to the peptide chain termination codons UAG and UAA. The polypeptide is Peptide chain release factor 1 (Levilactobacillus brevis (strain ATCC 367 / BCRC 12310 / CIP 105137 / JCM 1170 / LMG 11437 / NCIMB 947 / NCTC 947) (Lactobacillus brevis)).